Here is a 316-residue protein sequence, read N- to C-terminus: Peroxidase 31 (316 aa).

An N-terminal signal peptide occupies residues 1–19 (MASLKSLFLLFLFFFTAQS). Intrachain disulfides connect Cys30–Cys111, Cys63–Cys68, Cys117–Cys312, and Cys196–Cys222. His61 serves as the catalytic Proton acceptor. Residues Asp62, Gly67, Asp69, and Ser71 each contribute to the Ca(2+) site. Pro159 provides a ligand contact to substrate. Residue His189 participates in heme b binding. Ser190 contacts Ca(2+). Asn206 carries an N-linked (GlcNAc...) asparagine glycan. Residues Asp236, Thr239, and Asp244 each coordinate Ca(2+).

The protein belongs to the peroxidase family. Classical plant (class III) peroxidase subfamily. It depends on heme b as a cofactor. Ca(2+) serves as cofactor.

It is found in the secreted. The enzyme catalyses 2 a phenolic donor + H2O2 = 2 a phenolic radical donor + 2 H2O. Removal of H(2)O(2), oxidation of toxic reductants, biosynthesis and degradation of lignin, suberization, auxin catabolism, response to environmental stresses such as wounding, pathogen attack and oxidative stress. These functions might be dependent on each isozyme/isoform in each plant tissue. This Arabidopsis thaliana (Mouse-ear cress) protein is Peroxidase 31 (PER31).